The chain runs to 164 residues: Translocator protein homolog (164 aa).

Helical transmembrane passes span Trp-16–Lys-34, Ser-52–Ala-72, Ile-89–Tyr-106, Lys-112–Trp-132, and Lys-141–Leu-163.

The protein belongs to the TspO/BZRP family.

The protein resides in the mitochondrion membrane. May play a role in the transport of porphyrins and heme. The sequence is that of Translocator protein homolog from Schizosaccharomyces pombe (strain 972 / ATCC 24843) (Fission yeast).